The sequence spans 1484 residues: MKPRAECCSPKFWLVLAVLAVSGSRARSQKSPPSIGIAVILVGTSDEVAIKDAHEKDDFHHLSVVPRVELVAMNETDPKSIITRICDLMSDRKIQGVVFADDTDQEAIAQILDFISAQTLTPILGIHGGSSMIMADKDESSMFFQFGPSIEQQASVMLNIMEEYDWYIFSIVTTYFPGYQDFVNKIRSTIENSFVGWELEEVLLLDMSLDDGDSKIQNQLKKLQSPIILLYCTKEEATYIFEVANSVGLTGYGYTWIVPSLVAGDTDTVPAEFPTGLISVSYDEWDYGLPARVRDGIAIITTAASDMLSEHSFIPEPKSSCYNTHEKRIYQSNMLNRYLINVTFEGRNLSFSEDGYQMHPKLVIILLNKERKWERVGKWKDKSLQMKYYVWPRMCPETEEQEDDHLSIVTLEEAPFVIVESVDPLSGTCMRNTVPCQKRIVTENKTDEEPGYIKKCCKGFCIDILKKISKSVKFTYDLYLVTNGKHGKKINGTWNGMIGEVVMKRAYMAVGSLTINEERSEVVDFSVPFIETGISVMVSRSNGTVSPSAFLEPFSADVWVMMFVMLLIVSAVAVFVFEYFSPVGYNRCLADGREPGGPSFTIGKAIWLLWGLVFNNSVPVQNPKGTTSKIMVSVWAFFAVIFLASYTANLAAFMIQEEYVDQVSGLSDKKFQRPNDFSPPFRFGTVPNGSTERNIRNNYAEMHAYMGKFNQRGVDDALLSLKTGKLDAFIYDAAVLNYMAGRDEGCKLVTIGSGKVFASTGYGIAIQKDSGWKRQVDLAILQLFGDGEMEELEALWLTGICHNEKNEVMSSQLDIDNMAGVFYMLGAAMALSLITFICEHLFYWQFRHCFMGVCSGKPGMVFSISRGIYSCIHGVAIEERQSVMNSPTATMNNTHSNILRLLRTAKNMANLSGVNGSPQSALDFIRRESSVYDISEHRRSFTHSDCKSYNNPPCEENLFSDYISEVERTFGNLQLKDSNVYQDHYHHHHRPHSIGSASSIDGLYDCDNPPFTTQSRSISKKPLDIGLPSSKHSQLSDLYGKFSFKSDRYSGHDDLIRSDVSDISTHTVTYGNIEGNAAKRRKQQYKDSLKKRPASAKSRREFDEIELAYRRRPPRSPDHKRYFRDKEGLRDFYLDQFRTKENSPHWEHVDLTDIYKERSDDFKRDSVSGGGPCTNRSHIKHGTGDKHGVVSGVPAPWEKNLTNVEWEDRSGGNFCRSCPSKLHNYSTTVTGQNSGRQACIRCEACKKAGNLYDISEDNSLQELDQPAAPVAVTSNASTTKYPQSPTNSKAQKKNRNKLRRQHSYDTFVDLQKEEAALAPRSVSLKDKGRFMDGSPYAHMFEMSAGESTFANNKSSVPTAGHHHHNNPGGGYMLSKSLYPDRVTQNPFIPTFGDDQCLLHGSKSYFFRQPTVAGASKARPDFRALVTNKPVVSALHGAVPARFQKDICIGNQSNPCVPNNKNPRAFNGSSNGHVYEKLSSIESDV.

Residues 1 to 26 form the signal peptide; sequence MKPRAECCSPKFWLVLAVLAVSGSRA. Topologically, residues 27–555 are extracellular; the sequence is RSQKSPPSIG…SPSAFLEPFS (529 aa). Asparagine 74 is a glycosylation site (N-linked (GlcNAc...) asparagine). Residues cysteine 86 and cysteine 321 are joined by a disulfide bond. Zn(2+) is bound by residues histidine 127 and glutamate 284. 4 N-linked (GlcNAc...) asparagine glycosylation sites follow: asparagine 341, asparagine 348, asparagine 444, and asparagine 491. 2 disulfide bridges follow: cysteine 429-cysteine 456 and cysteine 436-cysteine 457. L-glutamate is bound by residues threonine 514 and arginine 519. An N-linked (GlcNAc...) asparagine glycan is attached at asparagine 542. A helical membrane pass occupies residues 556-576; sequence ADVWVMMFVMLLIVSAVAVFV. The Cytoplasmic portion of the chain corresponds to 577 to 601; that stretch reads FEYFSPVGYNRCLADGREPGGPSFT. Residues 602–613 constitute an intramembrane region (discontinuously helical); the sequence is IGKAIWLLWGLV. Residues 604–623 form a pore-forming region; sequence KAIWLLWGLVFNNSVPVQNP. The Cytoplasmic segment spans residues 614–627; sequence FNNSVPVQNPKGTT. The helical transmembrane segment at 628-647 threads the bilayer; the sequence is SKIMVSVWAFFAVIFLASYT. Topologically, residues 648-819 are extracellular; sequence ANLAAFMIQE…SSQLDIDNMA (172 aa). Asparagine 688 carries N-linked (GlcNAc...) asparagine glycosylation. L-glutamate-binding positions include 690–691 and aspartate 732; that span reads ST. A helical membrane pass occupies residues 820-835; it reads GVFYMLGAAMALSLIT. Residues 836 to 1484 are Cytoplasmic-facing; the sequence is FICEHLFYWQ…EKLSSIESDV (649 aa). 4 positions are modified to phosphoserine: serine 882, serine 886, serine 917, and serine 920. A phosphotyrosine mark is found at tyrosine 962 and tyrosine 1039. Phosphoserine occurs at positions 1058, 1061, and 1064. Positions 1074 to 1097 are disordered; that stretch reads EGNAAKRRKQQYKDSLKKRPASAK. Tyrosine 1109 and tyrosine 1133 each carry phosphotyrosine. Position 1143 is a phosphoserine (serine 1143). Tyrosine 1155 is modified (phosphotyrosine). The tract at residues 1161-1194 is disordered; sequence DFKRDSVSGGGPCTNRSHIKHGTGDKHGVVSGVP. A phosphoserine mark is found at serine 1255 and serine 1259. The segment at 1271 to 1301 is disordered; it reads AVTSNASTTKYPQSPTNSKAQKKNRNKLRRQ. The span at 1272-1289 shows a compositional bias: polar residues; that stretch reads VTSNASTTKYPQSPTNSK. Basic residues predominate over residues 1290-1301; it reads AQKKNRNKLRRQ. An interaction with DAPK1 region spans residues 1292–1304; sequence KKNRNKLRRQHSY. Phosphoserine; by DAPK1 is present on serine 1303. Tyrosine 1474 carries the phosphotyrosine modification. The PDZ-binding signature appears at 1482–1484; sequence SDV.

It belongs to the glutamate-gated ion channel (TC 1.A.10.1) family. NR2B/GRIN2B subfamily. Heterotetramer. Forms heterotetrameric channels composed of two GluN1/zeta subunits (GRIN1), and two identical GluN2/epsilon subunits (GRIN2A, GRIN2B, GRIN2C or GRIN2D) or GluN3 subunits (GRIN3A or GRIN3B) (in vitro). Can also form heterotetrameric channels that contain at least two GluN1 subunits and at least two different GluN2 subunits (or a combination of one GluN2 and one GluN3 subunits) (in vitro). In vivo, the subunit composition may depend on the expression levels of the different subunits. Found in a complex with GRIN1 and GRIN3B. Found in a complex with GRIN1, GRIN3A and PPP2CB. Interacts with PDZ domains of PATJ, DLG3 and DLG4. Interacts with HIP1 and NETO1. Interacts with MAGI3. Interacts with DAPK1. Found in a complex with GRIN1 and PRR7. Interacts with PRR7. Interacts with CAMK2A. Interacts with ARC; preventing ARC oligomerization. Interacts with TMEM25. Interacts (via the extreme C-terminus) with FRMPD2 (via the second PDZ domain); the interaction is direct and is likely to promote NMDAR-mediated neural signal transmission. Interacts with FAM81A; the interaction facilitates condensate formation via liquid-liquid phase separation. Phosphorylated on tyrosine residues. Phosphorylation at Ser-1303 by DAPK1 enhances synaptic NMDA receptor channel activity. As to expression, primarily found in the fronto-parieto-temporal cortex and hippocampus pyramidal cells, lower expression in the basal ganglia.

The protein localises to the cell membrane. Its subcellular location is the postsynaptic cell membrane. The protein resides in the cell projection. It is found in the dendrite. It localises to the late endosome. The protein localises to the lysosome. Its subcellular location is the cytoplasm. The protein resides in the cytoskeleton. It carries out the reaction Ca(2+)(in) = Ca(2+)(out). The enzyme catalyses Na(+)(in) = Na(+)(out). The catalysed reaction is K(+)(in) = K(+)(out). In terms of biological role, component of N-methyl-D-aspartate (NMDA) receptors (NMDARs) that function as heterotetrameric, ligand-gated cation channels with high calcium permeability and voltage-dependent block by Mg(2+). Participates in synaptic plasticity for learning and memory formation by contributing to the long-term depression (LTD) of hippocampus membrane currents. Channel activation requires binding of the neurotransmitter L-glutamate to the GluN2 subunit, glycine or D-serine binding to the GluN1 subunit, plus membrane depolarization to eliminate channel inhibition by Mg(2+). NMDARs mediate simultaneously the potasium efflux and the influx of calcium and sodium. Each GluN2 subunit confers differential attributes to channel properties, including activation, deactivation and desensitization kinetics, pH sensitivity, Ca2(+) permeability, and binding to allosteric modulators. In concert with DAPK1 at extrasynaptic sites, acts as a central mediator for stroke damage. Its phosphorylation at Ser-1303 by DAPK1 enhances synaptic NMDA receptor channel activity inducing injurious Ca2+ influx through them, resulting in an irreversible neuronal death. This is Glutamate receptor ionotropic, NMDA 2B from Homo sapiens (Human).